The following is a 204-amino-acid chain: High mobility group-T protein (204 aa).

2 consecutive DNA-binding regions (HMG box) follow at residues 8–78 (PRGK…RSYI) and 94–162 (PKRP…TAYR). The disordered stretch occupies residues 162-204 (RNKGKVPVSMPAKAAAPAKDDDDDDDDDDDDEDDDDDDDEDDE). A compositionally biased stretch (acidic residues) spans 181–204 (DDDDDDDDDDDDEDDDDDDDEDDE).

This sequence belongs to the HMGB family.

Its subcellular location is the nucleus. The protein resides in the chromosome. In terms of biological role, binds preferentially single-stranded DNA and unwinds double-stranded DNA. In Oncorhynchus mykiss (Rainbow trout), this protein is High mobility group-T protein.